Here is a 344-residue protein sequence, read N- to C-terminus: MTVTQLSYKDAGVDIHAGNDLVERIKGDVKRTRRPEVIGGLGGFGALCALPTKYKEPILVSGTDGVGTKLRLAIDLNKHDTIGIDLVAMCVNDLVVQGAEPLFFLDYYATGKLDVDVASSVIKGIANGCEQSCCALVGGETAEMPGMYHAGDYDLAGFCVGVVEKSEIIDGSKVQVGDTLIALGSSGPHSNGYSLIRKVLEVSGTKPMDLLEGKPLSEHFLAPTKIYVKSVLELIKQAEVHAIAHLTGGGFWENIPRVLPADVKAVINEASWEWLPSFKWLQEKGNISRYEMYRTFNCGVGMVIALPEKDVETALKVLTEAGENAWVIGKIEALGSGTEQVEIL.

This sequence belongs to the AIR synthase family.

Its subcellular location is the cytoplasm. It carries out the reaction 2-formamido-N(1)-(5-O-phospho-beta-D-ribosyl)acetamidine + ATP = 5-amino-1-(5-phospho-beta-D-ribosyl)imidazole + ADP + phosphate + H(+). It functions in the pathway purine metabolism; IMP biosynthesis via de novo pathway; 5-amino-1-(5-phospho-D-ribosyl)imidazole from N(2)-formyl-N(1)-(5-phospho-D-ribosyl)glycinamide: step 2/2. This is Phosphoribosylformylglycinamidine cyclo-ligase from Glaesserella parasuis serovar 5 (strain SH0165) (Haemophilus parasuis).